A 432-amino-acid polypeptide reads, in one-letter code: Serine hydroxymethyltransferase (432 aa).

(6S)-5,6,7,8-tetrahydrofolate is bound by residues leucine 127 and 131 to 133 (GHL). Residue lysine 236 is modified to N6-(pyridoxal phosphate)lysine.

The protein belongs to the SHMT family. Homodimer. Requires pyridoxal 5'-phosphate as cofactor.

The protein localises to the cytoplasm. It carries out the reaction (6R)-5,10-methylene-5,6,7,8-tetrahydrofolate + glycine + H2O = (6S)-5,6,7,8-tetrahydrofolate + L-serine. It functions in the pathway one-carbon metabolism; tetrahydrofolate interconversion. The protein operates within amino-acid biosynthesis; glycine biosynthesis; glycine from L-serine: step 1/1. In terms of biological role, catalyzes the reversible interconversion of serine and glycine with tetrahydrofolate (THF) serving as the one-carbon carrier. This reaction serves as the major source of one-carbon groups required for the biosynthesis of purines, thymidylate, methionine, and other important biomolecules. Also exhibits THF-independent aldolase activity toward beta-hydroxyamino acids, producing glycine and aldehydes, via a retro-aldol mechanism. The polypeptide is Serine hydroxymethyltransferase (Rhizobium rhizogenes (strain K84 / ATCC BAA-868) (Agrobacterium radiobacter)).